A 426-amino-acid chain; its full sequence is Ankyrin repeat-containing protein BDA1 (426 aa).

ANK repeat units lie at residues 1 to 29 (MDSK…DILQ), 36 to 65 (IIHT…SFAK), 70 to 99 (YGLS…SLVR), 104 to 134 (GGMT…SIKD), 138 to 167 (NGET…KMRD), and 182 to 212 (GGNT…DRNI). Helical transmembrane passes span 288 to 308 (ALLV…AQLL), 329 to 349 (WGCN…LLPV), 355 to 375 (WWYF…MYMM), and 380 to 400 (FFFL…VLYV).

The protein resides in the cell membrane. Involved in plant defense. Required for basal resistance against Pseudomonas syringae pv. tomato DC3000. Required for resistance against nonpathogenic bacteria. May be involved in signaling components that function downstream of SNC2 and upstream of NPR1 and WRKY70 to regulate defense responses. The protein is Ankyrin repeat-containing protein BDA1 of Arabidopsis thaliana (Mouse-ear cress).